A 187-amino-acid polypeptide reads, in one-letter code: UPF0301 protein VS_2679 (187 aa).

Belongs to the UPF0301 (AlgH) family.

The polypeptide is UPF0301 protein VS_2679 (Vibrio atlanticus (strain LGP32) (Vibrio splendidus (strain Mel32))).